Here is a 555-residue protein sequence, read N- to C-terminus: MAKLILFHEDSRQALERGVNALANAVKVTLGPRGRNVLLEKKFGAPEIINDGVSIAKEIELEDPHENAGARLVQEVAAKTKEIAGDGTTTATVLAQAIVREGLTNVAAGANPIVLRRGIEKAVATLVEAIAAKAQPVADEAAIRSIAAVSAGNDDEVGQMIADAVAKVTKDGVITVEESKSLATELEVVEGMQFDRGYLSPYFVTDQDRQVVEYDNPLILLTDKKIASIQDLVPVLEDVARAGRPLLIIAEDIEGEALATLVVNKARGVLNTVAVKAPAFGDRRKAILQDIAVLTGGQVISEEVGLSLADANSSVLGKAQKITISKDTTIIVAGDENKADVAARIAQIRRSLEETDSDYDREKLQERIAKLAGGVAVIKVGAPTETELKNRKLRIEDALNATRAAIEEGVVPGGGTTLLHLASALTSLQASLTVADEKLGVEIVARALEAPLRQIADNAGAEGSVVVEKLRDKDFNFGYNALTGQYEDLVASGILDPAKVVRSALQDAASVASLILTTEVLVVDQPEPEPAMPAGGDMGGMGGMGMPGMGGMGMM.

ATP-binding positions include 29–32 (TLGP), 86–90 (DGTTT), Gly-414, 480–482 (NAL), and Asp-496.

Belongs to the chaperonin (HSP60) family. In terms of assembly, forms a cylinder of 14 subunits composed of two heptameric rings stacked back-to-back. Interacts with the co-chaperonin GroES.

Its subcellular location is the cytoplasm. It catalyses the reaction ATP + H2O + a folded polypeptide = ADP + phosphate + an unfolded polypeptide.. Functionally, together with its co-chaperonin GroES, plays an essential role in assisting protein folding. The GroEL-GroES system forms a nano-cage that allows encapsulation of the non-native substrate proteins and provides a physical environment optimized to promote and accelerate protein folding. The polypeptide is Chaperonin GroEL 2 (Synechococcus sp. (strain ATCC 27144 / PCC 6301 / SAUG 1402/1) (Anacystis nidulans)).